The sequence spans 650 residues: 1-deoxy-D-xylulose-5-phosphate synthase 2 (650 aa).

Thiamine diphosphate-binding positions include His79 and 120-122 (AHS). Asp151 serves as a coordination point for Mg(2+). Thiamine diphosphate contacts are provided by residues 152–153 (GS), Asn180, Tyr289, and Glu371. Asn180 is a Mg(2+) binding site.

It belongs to the transketolase family. DXPS subfamily. Homodimer. The cofactor is Mg(2+). Requires thiamine diphosphate as cofactor.

It catalyses the reaction D-glyceraldehyde 3-phosphate + pyruvate + H(+) = 1-deoxy-D-xylulose 5-phosphate + CO2. The protein operates within metabolic intermediate biosynthesis; 1-deoxy-D-xylulose 5-phosphate biosynthesis; 1-deoxy-D-xylulose 5-phosphate from D-glyceraldehyde 3-phosphate and pyruvate: step 1/1. Functionally, catalyzes the acyloin condensation reaction between C atoms 2 and 3 of pyruvate and glyceraldehyde 3-phosphate to yield 1-deoxy-D-xylulose-5-phosphate (DXP). This chain is 1-deoxy-D-xylulose-5-phosphate synthase 2, found in Zymomonas mobilis subsp. mobilis (strain ATCC 31821 / ZM4 / CP4).